We begin with the raw amino-acid sequence, 66 residues long: Large ribosomal subunit protein bL33 (66 aa).

This sequence belongs to the bacterial ribosomal protein bL33 family.

This is Large ribosomal subunit protein bL33 from Prochlorococcus marinus (strain MIT 9303).